Here is a 94-residue protein sequence, read N- to C-terminus: Integration host factor subunit beta (94 aa).

The protein belongs to the bacterial histone-like protein family. In terms of assembly, heterodimer of an alpha and a beta chain.

This protein is one of the two subunits of integration host factor, a specific DNA-binding protein that functions in genetic recombination as well as in transcriptional and translational control. The protein is Integration host factor subunit beta of Pseudomonas paraeruginosa (strain DSM 24068 / PA7) (Pseudomonas aeruginosa (strain PA7)).